A 29-amino-acid chain; its full sequence is Kunitz-type serine protease inhibitor RsTIQ7 (29 aa).

In terms of domain architecture, BPTI/Kunitz inhibitor spans 6-26; the sequence is QCVPTADPGPCKAYIPMWWYN.

Functionally, serine protease inhibitor. Inhibits trypsin, elastase, plasmin and kallikrein. This chain is Kunitz-type serine protease inhibitor RsTIQ7, found in Rhipicephalus sanguineus (Brown dog tick).